The chain runs to 183 residues: CKLF-like MARVEL transmembrane domain-containing protein 6 (183 aa).

N-acetylmethionine is present on methionine 1. At 1–39 (MENGAVYSPTTEEDPGPARGPRSGLAAYFFMGRLPLLRR) the chain is on the cytoplasmic side. Position 8 is a phosphoserine (serine 8). An MARVEL domain is found at 33–160 (RLPLLRRVLK…DFITMLYEKR (128 aa)). The chain crosses the membrane as a helical span at residues 40–60 (VLKGLQLLLSLLAFICEEVVS). The Extracellular portion of the chain corresponds to 61–67 (QCTLCGG). The chain crosses the membrane as a helical span at residues 68–88 (LYFFEFVSCSAFLLSLLILIV). Residues 89–106 (YCTPFYERVDTTKVKSSD) lie on the Cytoplasmic side of the membrane. The chain crosses the membrane as a helical span at residues 107 to 127 (FYITLGTGCVFLLASIIFVST). At 128–134 (HDRTSAE) the chain is on the extracellular side. A helical transmembrane segment spans residues 135–155 (IAAIVFGFIASFMFLLDFITM). Over 156–183 (LYEKRQESQLRKPENTTRAEALTEPLNA) the chain is Cytoplasmic. Threonine 171 carries the post-translational modification Phosphothreonine.

The protein belongs to the chemokine-like factor family. Interacts with PD-L1/CD274 (via transmembrane domain); the interaction is direct. Interacts with CMTM4. Interacts with CD58, ARG1, ENO1 and TMPO. In terms of tissue distribution, expressed in the leukocytes, placenta and testis.

Its subcellular location is the cell membrane. It localises to the early endosome membrane. It is found in the recycling endosome membrane. In terms of biological role, master regulator of recycling and plasma membrane expression of PD-L1/CD274, an immune inhibitory ligand critical for immune tolerance to self and antitumor immunity. Associates with both constitutive and IFNG-induced PD-L1/CD274 at recycling endosomes, where it protects PD-L1/CD274 from being targeted for lysosomal degradation, likely by preventing its STUB1-mediated ubiquitination. May stabilize PD-L1/CD274 expression on antigen presenting cells and potentiates inhibitory signaling by PDCD1/CD279, its receptor on T-cells, ultimately triggering T-cell anergy. This is CKLF-like MARVEL transmembrane domain-containing protein 6 from Homo sapiens (Human).